Reading from the N-terminus, the 202-residue chain is NADH-quinone oxidoreductase subunit C (202 aa).

This sequence belongs to the complex I 30 kDa subunit family. In terms of assembly, NDH-1 is composed of 14 different subunits. Subunits NuoB, C, D, E, F, and G constitute the peripheral sector of the complex.

Its subcellular location is the cell inner membrane. It carries out the reaction a quinone + NADH + 5 H(+)(in) = a quinol + NAD(+) + 4 H(+)(out). In terms of biological role, NDH-1 shuttles electrons from NADH, via FMN and iron-sulfur (Fe-S) centers, to quinones in the respiratory chain. The immediate electron acceptor for the enzyme in this species is believed to be ubiquinone. Couples the redox reaction to proton translocation (for every two electrons transferred, four hydrogen ions are translocated across the cytoplasmic membrane), and thus conserves the redox energy in a proton gradient. The chain is NADH-quinone oxidoreductase subunit C from Bartonella quintana (strain Toulouse) (Rochalimaea quintana).